The chain runs to 336 residues: Ketol-acid reductoisomerase (NADP(+)) (336 aa).

The region spanning 1–182 is the KARI N-terminal Rossmann domain; sequence MAVIYYDKDA…GVTRAGVIET (182 aa). Residues 25 to 28, arginine 48, serine 51, serine 53, and 83 to 86 contribute to the NADP(+) site; these read YGSQ and DEHQ. Histidine 108 is a catalytic residue. NADP(+) is bound at residue glycine 134. In terms of domain architecture, KARI C-terminal knotted spans 183–328; sequence TFKEETETDL…KELRKMMPWL (146 aa). Mg(2+) contacts are provided by aspartate 191, glutamate 195, glutamate 227, and glutamate 231. Serine 252 is a substrate binding site.

The protein belongs to the ketol-acid reductoisomerase family. Requires Mg(2+) as cofactor.

It catalyses the reaction (2R)-2,3-dihydroxy-3-methylbutanoate + NADP(+) = (2S)-2-acetolactate + NADPH + H(+). The catalysed reaction is (2R,3R)-2,3-dihydroxy-3-methylpentanoate + NADP(+) = (S)-2-ethyl-2-hydroxy-3-oxobutanoate + NADPH + H(+). It participates in amino-acid biosynthesis; L-isoleucine biosynthesis; L-isoleucine from 2-oxobutanoate: step 2/4. Its pathway is amino-acid biosynthesis; L-valine biosynthesis; L-valine from pyruvate: step 2/4. Involved in the biosynthesis of branched-chain amino acids (BCAA). Catalyzes an alkyl-migration followed by a ketol-acid reduction of (S)-2-acetolactate (S2AL) to yield (R)-2,3-dihydroxy-isovalerate. In the isomerase reaction, S2AL is rearranged via a Mg-dependent methyl migration to produce 3-hydroxy-3-methyl-2-ketobutyrate (HMKB). In the reductase reaction, this 2-ketoacid undergoes a metal-dependent reduction by NADPH to yield (R)-2,3-dihydroxy-isovalerate. This is Ketol-acid reductoisomerase (NADP(+)) from Thermotoga maritima (strain ATCC 43589 / DSM 3109 / JCM 10099 / NBRC 100826 / MSB8).